We begin with the raw amino-acid sequence, 604 residues long: Nuclear cap-binding protein subunit 3 (604 aa).

The disordered stretch occupies residues M1 to E36. The segment at D116–P177 is RNA recognition motif (RRM) domain. A WLDD motif; essential for 7-methylguanosine-containing mRNA cap binding motif is present at residues W145–D148. Disordered stretches follow at residues M168–L219, K319–E383, and Q457–S604. Over residues D173–E198 the composition is skewed to basic and acidic residues. Composition is skewed to acidic residues over residues S199–L219 and E331–D349. Positions R350–A370 are enriched in basic and acidic residues. A compositionally biased stretch (polar residues) spans N458–V469. Basic and acidic residues-rich tracts occupy residues P495–S505, T539–E548, and I569–L582. A compositionally biased stretch (low complexity) spans E595–S604.

It belongs to the NCBP3 family. In terms of assembly, component of an alternative cap-binding complex (CBC) composed of NCBP1/CBP80 and NCBP3.

The protein localises to the nucleus. It is found in the cytoplasm. Its function is as follows. Associates with NCBP1/CBP80 to form an alternative cap-binding complex (CBC) which plays a key role in mRNA export. NCBP3 serves as adapter protein linking the capped RNAs (m7GpppG-capped RNA) to NCBP1/CBP80. Unlike the conventional CBC with NCBP2 which binds both small nuclear RNA (snRNA) and messenger (mRNA) and is involved in their export from the nucleus, the alternative CBC with NCBP3 does not bind snRNA and associates only with mRNA thereby playing a role in only mRNA export. This chain is Nuclear cap-binding protein subunit 3, found in Gallus gallus (Chicken).